A 432-amino-acid chain; its full sequence is Glutamate-1-semialdehyde 2,1-aminomutase 2 (432 aa).

K268 is subject to N6-(pyridoxal phosphate)lysine.

It belongs to the class-III pyridoxal-phosphate-dependent aminotransferase family. HemL subfamily. In terms of assembly, homodimer. It depends on pyridoxal 5'-phosphate as a cofactor.

The protein localises to the cytoplasm. The enzyme catalyses (S)-4-amino-5-oxopentanoate = 5-aminolevulinate. It participates in porphyrin-containing compound metabolism; protoporphyrin-IX biosynthesis; 5-aminolevulinate from L-glutamyl-tRNA(Glu): step 2/2. The chain is Glutamate-1-semialdehyde 2,1-aminomutase 2 from Listeria innocua serovar 6a (strain ATCC BAA-680 / CLIP 11262).